Consider the following 321-residue polypeptide: Protease HtpX homolog (321 aa).

A run of 2 helical transmembrane segments spans residues 6-26 and 28-48; these read TAML…LIGG and GGMM…YWNS. A Zn(2+)-binding site is contributed by histidine 130. The active site involves glutamate 131. Histidine 134 contacts Zn(2+). The next 2 membrane-spanning stretches (helical) occupy residues 145-165 and 173-193; these read ITAT…FFGG and PLGF…AMLV. Glutamate 202 is a binding site for Zn(2+). Positions 281–321 are disordered; it reads EFSPRASTPPPSGDRPVRKSGSVPTTGWRRGNENERKGPWS. Positions 310–321 are enriched in basic and acidic residues; it reads RGNENERKGPWS.

It belongs to the peptidase M48B family. The cofactor is Zn(2+).

It localises to the cell inner membrane. The polypeptide is Protease HtpX homolog (Agrobacterium fabrum (strain C58 / ATCC 33970) (Agrobacterium tumefaciens (strain C58))).